Consider the following 327-residue polypeptide: Phenylalanine--tRNA ligase alpha subunit (327 aa).

Residue Glu252 coordinates Mg(2+).

It belongs to the class-II aminoacyl-tRNA synthetase family. Phe-tRNA synthetase alpha subunit type 1 subfamily. As to quaternary structure, tetramer of two alpha and two beta subunits. Requires Mg(2+) as cofactor.

It is found in the cytoplasm. The enzyme catalyses tRNA(Phe) + L-phenylalanine + ATP = L-phenylalanyl-tRNA(Phe) + AMP + diphosphate + H(+). This Shewanella baltica (strain OS185) protein is Phenylalanine--tRNA ligase alpha subunit.